The primary structure comprises 57 residues: MLFKSLQSISSVSSIQKNQISSVSVGSSQSNNNTALLDAAAVVVVPGLLAATAVAHI.

A helical transmembrane segment spans residues 34–51 (TALLDAAAVVVVPGLLAA).

Its subcellular location is the membrane. This is an uncharacterized protein from Dictyostelium discoideum (Social amoeba).